Reading from the N-terminus, the 205-residue chain is Protein phosphatase inhibitor 2 family member C (205 aa).

2 disordered regions span residues 1–51 and 70–114; these read MSAS…DESS and EPGT…DHSC. The required for binding PPP1CC stretch occupies residues 12 to 17; it reads KGILKN. Low complexity predominate over residues 19-34; it reads SSSGSSVATSGQQSGG. The interval 43–55 is required for binding PPP1CC; it reads KSQKWDESSILAT. Positions 84-102 are enriched in basic and acidic residues; the sequence is DSVRDVEGEDSVRGVEGKE. A required for binding PPP1CC catalytic center, displacing metal ions and inhibition of PPP1CC catalytic activity region spans residues 147–150; the sequence is HYNE. Residues 165 to 205 form a disordered region; sequence LQSEDDENEERPQATNEEKTAAEESEEAPLSGGLQTQSCDP. A compositionally biased stretch (basic and acidic residues) spans 174–186; sequence ERPQATNEEKTAA.

It belongs to the protein phosphatase inhibitor 2 family.

Its function is as follows. Functions as a protein phosphatase inhibitor. It inhibits activity of the catalytic subunit of PP1 and weakly inhibits the activity of myosin-associated phosphates. The chain is Protein phosphatase inhibitor 2 family member C (PPP1R2C) from Macaca fascicularis (Crab-eating macaque).